The sequence spans 209 residues: MIRFITIPDFADYQVTLKLMEDYVNKVISDHKPEIIYLVEHSEVYTAGTNYKQEELLNYGDIPVIYTGRGGKFTFHGPGQRVIYPILNLASPNRHKDLKLYIKMLEEWIINSLNYFGIKAYIIKDKVGIWVKVRKDEFAKIAAIGVRVRKWVTYHGVAINISTDLSKFSGIIPCGLENSLVTSLNQLGIHVEMSEFDKIIQTEFNKIFK.

Positions 30-209 (DHKPEIIYLV…IQTEFNKIFK (180 aa)) constitute a BPL/LPL catalytic domain. Residues 69-76 (RGGKFTFH), 143-145 (AIG), and 156-158 (GVA) each bind substrate. The active-site Acyl-thioester intermediate is Cys174.

This sequence belongs to the LipB family.

The protein resides in the cytoplasm. The catalysed reaction is octanoyl-[ACP] + L-lysyl-[protein] = N(6)-octanoyl-L-lysyl-[protein] + holo-[ACP] + H(+). The protein operates within protein modification; protein lipoylation via endogenous pathway; protein N(6)-(lipoyl)lysine from octanoyl-[acyl-carrier-protein]: step 1/2. Catalyzes the transfer of endogenously produced octanoic acid from octanoyl-acyl-carrier-protein onto the lipoyl domains of lipoate-dependent enzymes. Lipoyl-ACP can also act as a substrate although octanoyl-ACP is likely to be the physiological substrate. In Rickettsia conorii (strain ATCC VR-613 / Malish 7), this protein is Octanoyltransferase.